The sequence spans 627 residues: tRNA uridine 5-carboxymethylaminomethyl modification enzyme MnmG (627 aa).

FAD is bound by residues 16–21 (GAGHAG), valine 128, and serine 183. NAD(+) is bound at residue 277-291 (GPRYCPSIEDKIVRF). Glutamine 374 serves as a coordination point for FAD.

This sequence belongs to the MnmG family. In terms of assembly, homodimer. Heterotetramer of two MnmE and two MnmG subunits. It depends on FAD as a cofactor.

The protein localises to the cytoplasm. Functionally, NAD-binding protein involved in the addition of a carboxymethylaminomethyl (cmnm) group at the wobble position (U34) of certain tRNAs, forming tRNA-cmnm(5)s(2)U34. This is tRNA uridine 5-carboxymethylaminomethyl modification enzyme MnmG from Finegoldia magna (strain ATCC 29328 / DSM 20472 / WAL 2508) (Peptostreptococcus magnus).